The chain runs to 863 residues: Penicillin-binding protein 1A (863 aa).

Over 1 to 28 (MTENRDNKTSQSEKTTQKKKKKKFKAFK) the chain is Cytoplasmic. Residues 29-49 (IILITFITLIVISLVTAIGIT) traverse the membrane as a helical; Signal-anchor for type II membrane protein segment. At 50–863 (LAIIKTSPDI…KPIIRPKKHF (814 aa)) the chain is on the extracellular side. Positions 71-248 (SKIYDDKGEL…PSVYYPYSRT (178 aa)) are transglycosylase. Catalysis depends on E110, which acts as the Proton donor; for transglycosylase activity. A transpeptidase region spans residues 392–674 (ASAVLTDYHT…AAALFGKIMN (283 aa)). The active-site Acyl-ester intermediate; for transpeptidase activity is S431. Positions 774–863 (DDDMYVLPDK…KPIIRPKKHF (90 aa)) are disordered. A compositionally biased stretch (polar residues) spans 808 to 836 (EDATNEASTEPSPNTDTVPEDSTNNLDPT). Positions 837 to 846 (KNTEKKPSDK) are enriched in basic and acidic residues. A compositionally biased stretch (basic residues) spans 847–863 (KNKKHVIKPIIRPKKHF).

This sequence in the N-terminal section; belongs to the glycosyltransferase 51 family. In the C-terminal section; belongs to the transpeptidase family.

It is found in the cell membrane. It carries out the reaction [GlcNAc-(1-&gt;4)-Mur2Ac(oyl-L-Ala-gamma-D-Glu-L-Lys-D-Ala-D-Ala)](n)-di-trans,octa-cis-undecaprenyl diphosphate + beta-D-GlcNAc-(1-&gt;4)-Mur2Ac(oyl-L-Ala-gamma-D-Glu-L-Lys-D-Ala-D-Ala)-di-trans,octa-cis-undecaprenyl diphosphate = [GlcNAc-(1-&gt;4)-Mur2Ac(oyl-L-Ala-gamma-D-Glu-L-Lys-D-Ala-D-Ala)](n+1)-di-trans,octa-cis-undecaprenyl diphosphate + di-trans,octa-cis-undecaprenyl diphosphate + H(+). The enzyme catalyses Preferential cleavage: (Ac)2-L-Lys-D-Ala-|-D-Ala. Also transpeptidation of peptidyl-alanyl moieties that are N-acyl substituents of D-alanine.. The protein operates within cell wall biogenesis; peptidoglycan biosynthesis. Its function is as follows. Cell wall formation. Synthesis of cross-linked peptidoglycan from the lipid intermediates. The enzyme has a penicillin-insensitive transglycosylase N-terminal domain (formation of linear glycan strands) and a penicillin-sensitive transpeptidase C-terminal domain (cross-linking of the peptide subunits). This chain is Penicillin-binding protein 1A (pbpA), found in Clostridium novyi (strain NT).